Here is a 1151-residue protein sequence, read N- to C-terminus: Importin beta (1151 aa).

HEAT repeat units lie at residues 1-36, 37-82, 83-132, 133-175, 176-222, 223-269, 270-316, 317-377, 378-416, 417-453, 454-495, 496-540, 541-593, 594-642, 643-704, 705-756, 757-811, 812-880, 881-932, 933-978, 979-1027, 1028-1074, 1075-1120, and 1121-1151; these read MDLASFQNLLQQCQTEQDTQKRKEVEDFYFKYKQEE, PASY…GNGN, PECV…VAQF, PEFF…TKIG, GKAI…DSVI, PNSV…AVLK, PMVK…RAKK, AISE…KVIF, PLIKDFVSYAKANPTVHNCFAVANIFTITAEGLARLVTK, EDIVFTIDTLLELSNHPHQRVRYSVLSAIGQLSEDYA, PTFQ…HLKK, AETY…LKND, FADM…AGTL, PQLF…PETF, PKYM…MRKT, PAAF…TVAS, PPAV…SYTE, TVNK…ALGD, LSLD…KYLS, PANS…YEGD, PGLA…AQAF, PTEL…ARND, PNFM…VLTQ, and IAGHGTILADTIAKCSEYVQKTYSLYTSVRQ.

Belongs to the importin beta family.

Its subcellular location is the nucleus intermembrane space. It localises to the cytoplasm. The protein resides in the nucleus. Functions in nuclear protein import as nuclear transport receptor. Involved in encystation process. Constitutive expression enhances cyst production and increases transcription of endogenous genes involved in encystation. Level of mRNA of the transcriptional factor myb1-like protein increases in early stages of the encystation process followed by increased mRNAs of the cyst wall proteins cwp1-3. This Giardia intestinalis (strain ATCC 50803 / WB clone C6) (Giardia lamblia) protein is Importin beta.